We begin with the raw amino-acid sequence, 501 residues long: Suppressor of hairless protein homolog (501 aa).

DNA-binding regions lie at residues 58-68, 166-171, and 193-198; these read QKSYGNEKRFF, SKPSKK, and RLRSQT. The 91-residue stretch at 356–446 folds into the IPT/TIG domain; the sequence is PVVESLQLNG…YSTSLTFTYT (91 aa).

Belongs to the Su(H) family. Interacts with activated Notch proteins. Forms a ternary complex with nrarp and the intracellular domain (NICD) of notch1. Interacts with rita1, leading to nuclear export, prevent the interaction between rbpj and NICD product and subsequent down-regulation of the Notch signaling pathway.

It is found in the nucleus. It localises to the cytoplasm. Transcriptional regulator that plays a central role in Notch signaling, a signaling pathway involved in cell-cell communication that regulates a broad spectrum of cell-fate determinations. Acts as a transcriptional repressor when it is not associated with Notch proteins. When associated with some NICD product of Notch proteins (Notch intracellular domain), it acts as a transcriptional activator that activates transcription of Notch target genes. Required for the transcriptional activation of ESR1, suggesting that it is required during primary neurogenesis in embryos. Binds to the oxygen responsive element of COX4I2 and activates its transcription under hypoxia conditions (4% oxygen). This is Suppressor of hairless protein homolog (rbpj) from Xenopus laevis (African clawed frog).